Here is a 1355-residue protein sequence, read N- to C-terminus: Probable aldehyde oxidase 2 (1355 aa).

The 88-residue stretch at Arg-9 to Ile-96 folds into the 2Fe-2S ferredoxin-type domain. Residues Cys-48, Cys-53, Cys-56, and Cys-78 each contribute to the [2Fe-2S] cluster site. One can recognise an FAD-binding PCMH-type domain in the interval Val-244–Ser-422. The segment at Pro-544–Asp-577 is disordered. Over residues Asn-548–Ser-566 the composition is skewed to polar residues.

This sequence belongs to the xanthine dehydrogenase family. Aldehyde oxidases (AO) are homodimers and heterodimers of AO subunits. [2Fe-2S] cluster serves as cofactor. FAD is required as a cofactor. Requires Mo-molybdopterin as cofactor.

It carries out the reaction an aldehyde + O2 + H2O = a carboxylate + H2O2 + H(+). The sequence is that of Probable aldehyde oxidase 2 from Oryza sativa subsp. japonica (Rice).